A 58-amino-acid chain; its full sequence is MNWKVLEHVPLLLYILAAKTLILCLTFAGVKMYQRKRLEAKQQKLEAERKKQSEKKDN.

The helical transmembrane segment at 10 to 32 (PLLLYILAAKTLILCLTFAGVKM) threads the bilayer. Residues 29–58 (GVKMYQRKRLEAKQQKLEAERKKQSEKKDN) are a coiled coil.

As to expression, expressed in heart, spleen, liver, stomach, muscle, lung, testis, skin, PBL and bone marrow.

Its subcellular location is the membrane. This chain is Small integral membrane protein 11, found in Homo sapiens (Human).